Reading from the N-terminus, the 87-residue chain is Histone H1.C6/H1.C9 (87 aa).

Residues 1 to 87 form a disordered region; sequence MSDAAVPPKK…KKAVKKAPKK (87 aa). A compositionally biased stretch (basic residues) spans 11–87; the sequence is ASPKKASPKK…KKAVKKAPKK (77 aa).

It is found in the nucleus. Its subcellular location is the chromosome. The protein is Histone H1.C6/H1.C9 of Trypanosoma cruzi.